Here is a 407-residue protein sequence, read N- to C-terminus: Betaine--homocysteine S-methyltransferase 1 (407 aa).

One can recognise a Hcy-binding domain in the interval arginine 11 to leucine 314. N6-succinyllysine occurs at positions 40, 93, and 98. A Zn(2+)-binding site is contributed by cysteine 217. N6-succinyllysine occurs at positions 232 and 241. Zn(2+)-binding residues include cysteine 299 and cysteine 300. The residue at position 330 (serine 330) is a Phosphoserine. Lysine 340 and lysine 377 each carry N6-succinyllysine.

In terms of assembly, homotetramer. The cofactor is Zn(2+). Highly expressed in liver and kidney (at protein level). Expressed at lower levels in testis, lung, cerebellum, skeletal muscle and pancreas (at protein level).

Its subcellular location is the cytoplasm. It localises to the cytosol. The protein resides in the nucleus. It carries out the reaction L-homocysteine + glycine betaine = N,N-dimethylglycine + L-methionine. It functions in the pathway amine and polyamine degradation; betaine degradation; sarcosine from betaine: step 1/2. It participates in amino-acid biosynthesis; L-methionine biosynthesis via de novo pathway; L-methionine from L-homocysteine (BhmT route): step 1/1. In terms of biological role, involved in the regulation of homocysteine metabolism. Converts betaine and homocysteine to dimethylglycine and methionine, respectively. This reaction is also required for the irreversible oxidation of choline. The protein is Betaine--homocysteine S-methyltransferase 1 of Rattus norvegicus (Rat).